A 62-amino-acid chain; its full sequence is MVKASRETRSKFLKVKCPDCENEQLVFEKATSVVECTVCGRILAEPTGGKAALKADIVATFE.

Positions 17, 20, 36, and 39 each coordinate Zn(2+). The segment at cysteine 17–cysteine 39 adopts a C4-type zinc-finger fold.

It belongs to the eukaryotic ribosomal protein eS27 family. As to quaternary structure, part of the 30S ribosomal subunit. Zn(2+) serves as cofactor.

The sequence is that of Small ribosomal subunit protein eS27 from Methanocorpusculum labreanum (strain ATCC 43576 / DSM 4855 / Z).